Consider the following 1587-residue polypeptide: DNA topoisomerase 2 (1587 aa).

Residues 1 to 15 (MSDADPFDMSDDDDN) show a composition bias toward acidic residues. Residues 1 to 47 (MSDADPFDMSDDDDNSVLSHTPPKKQKKAPTTKKGGSKPLADVENES) form a disordered region. Residues 22–31 (PPKKQKKAPT) are compositionally biased toward basic residues. ATP-binding positions include Asn126, Asn155, 183–185 (SSN), and 196–203 (GRNGFGAK). Interaction with DNA regions lie at residues 381–383 (KKK) and 381–386 (KKKNKN). 415 to 417 (QTK) contributes to the ATP binding site. The interval 461–485 (MLKKTDGGRRSRMNNPKLTDANKAG) is disordered. The region spanning 492-606 (CTLILTEGDS…SLLKIPEFLI (115 aa)) is the Toprim domain. Mg(2+)-binding residues include Glu498, Asp575, and Asp577. The Topo IIA-type catalytic domain occupies 743–1190 (IPSVVDGLKP…SKEDIWKRDL (448 aa)). Tyr833 functions as the O-(5'-phospho-DNA)-tyrosine intermediate in the catalytic mechanism. The interaction with DNA stretch occupies residues 1016–1025 (KLSKTMTTTN). Positions 1204–1587 (EARRQRKVAN…PRPRRPRRRS (384 aa)) are disordered. Low complexity predominate over residues 1271–1280 (LSFLGKSSAK). Over residues 1308–1320 (PKSEPKADPKPKD) the composition is skewed to basic and acidic residues. Over residues 1321–1334 (EDEDIVMEDSDIEE) the composition is skewed to acidic residues. The span at 1348–1364 (VKPESEDGQAKIAEAPK) shows a compositional bias: basic and acidic residues. The segment covering 1365-1375 (RGRAAAKPKPK) has biased composition (basic residues). 2 stretches are compositionally biased toward acidic residues: residues 1379–1391 (EDEEDELDDDDFM) and 1419–1430 (SDSDSDNGDDLL). 2 stretches are compositionally biased toward polar residues: residues 1441–1451 (GSTNGASTSDS) and 1466–1475 (GLKTTASKAS). Residues 1512-1521 (DNEPEDDDDE) show a composition bias toward acidic residues. The segment covering 1524–1542 (KPAAKGKAAAKGKSTAAAA) has biased composition (low complexity). Residues 1558–1568 (PKPPPRLPCPL) are compositionally biased toward pro residues. Over residues 1571–1587 (RRTHRSNPRPRRPRRRS) the composition is skewed to basic residues.

Belongs to the type II topoisomerase family. As to quaternary structure, homodimer. Requires Mg(2+) as cofactor. The cofactor is Mn(2+). It depends on Ca(2+) as a cofactor.

The protein resides in the nucleus. It catalyses the reaction ATP-dependent breakage, passage and rejoining of double-stranded DNA.. Functionally, control of topological states of DNA by transient breakage and subsequent rejoining of DNA strands. Topoisomerase II makes double-strand breaks. This Penicillium chrysogenum (Penicillium notatum) protein is DNA topoisomerase 2 (TOP2).